The following is a 267-amino-acid chain: DNA repair protein RecO (267 aa).

It belongs to the RecO family.

Functionally, involved in DNA repair and RecF pathway recombination. The sequence is that of DNA repair protein RecO from Moorella thermoacetica (strain ATCC 39073 / JCM 9320).